The chain runs to 132 residues: Large ribosomal subunit protein bL17 (132 aa).

This sequence belongs to the bacterial ribosomal protein bL17 family. As to quaternary structure, part of the 50S ribosomal subunit. Contacts protein L32.

In Marinobacter nauticus (strain ATCC 700491 / DSM 11845 / VT8) (Marinobacter aquaeolei), this protein is Large ribosomal subunit protein bL17.